A 311-amino-acid polypeptide reads, in one-letter code: Aspartate carbamoyltransferase catalytic subunit (311 aa).

Arginine 55 and threonine 56 together coordinate carbamoyl phosphate. Lysine 83 provides a ligand contact to L-aspartate. Carbamoyl phosphate contacts are provided by arginine 105, histidine 133, and glutamine 136. L-aspartate contacts are provided by arginine 166 and arginine 220. Glycine 261 and proline 262 together coordinate carbamoyl phosphate.

This sequence belongs to the aspartate/ornithine carbamoyltransferase superfamily. ATCase family. As to quaternary structure, heterododecamer (2C3:3R2) of six catalytic PyrB chains organized as two trimers (C3), and six regulatory PyrI chains organized as three dimers (R2).

The enzyme catalyses carbamoyl phosphate + L-aspartate = N-carbamoyl-L-aspartate + phosphate + H(+). It participates in pyrimidine metabolism; UMP biosynthesis via de novo pathway; (S)-dihydroorotate from bicarbonate: step 2/3. Its function is as follows. Catalyzes the condensation of carbamoyl phosphate and aspartate to form carbamoyl aspartate and inorganic phosphate, the committed step in the de novo pyrimidine nucleotide biosynthesis pathway. The polypeptide is Aspartate carbamoyltransferase catalytic subunit (Chlorobium chlorochromatii (strain CaD3)).